We begin with the raw amino-acid sequence, 60 residues long: uncharacterized protein (60 aa).

The helical transmembrane segment at 27-49 (YYWLVSTARMVLGVTILILILIG) threads the bilayer.

Its subcellular location is the membrane. This is an uncharacterized protein from Archaeoglobus fulgidus (strain ATCC 49558 / DSM 4304 / JCM 9628 / NBRC 100126 / VC-16).